Consider the following 1178-residue polypeptide: Mannosyltransferase regulator 4 (1178 aa).

Over Met1–Arg27 the chain is Cytoplasmic. A helical; Signal-anchor for type II membrane protein transmembrane segment spans residues Ile28–Pro48. At Gln49 to Asn1178 the chain is on the lumenal side. A DXD motif is present at residues Asp519 to Asp521. Positions Glu1041–Asn1178 are disordered. 6 consecutive repeat copies span residues Lys1042–Glu1049, Lys1050–Glu1057, Lys1058–Glu1065, Lys1066–Glu1073, Lys1074–Glu1081, and Lys1082–Glu1089. The 17 X 8 AA tandem repeats of K-K-K-K-E-E-E-E stretch occupies residues Lys1042–Glu1174. One copy of the 7; approximate repeat lies at Lys1090 to Glu1097. Repeat unit 8 spans residues Lys1098–Glu1105. One copy of the 9; approximate repeat lies at Lys1106 to Glu1113. The 10; approximate repeat unit spans residues Lys1114–Glu1121. One copy of the 11; approximate repeat lies at Asn1122–Glu1129. Residues Lys1130 to Glu1137 form repeat 12. The stretch at Lys1138–Lys1144 is one 13; approximate repeat. The 14; approximate repeat unit spans residues Asn1145 to Glu1152. Residues Lys1153–Glu1160 form a 15; approximate repeat. Residues Lys1161–Glu1168 form a 16; approximate repeat. Residues Lys1169–Glu1174 form a 17; truncated repeat.

Belongs to the MNN4 family.

Its subcellular location is the golgi apparatus membrane. Golgi apparatus protein involved in N-glycan mannosylphosphorylation. While MNN4 seems to have a regulatory role in N-glycan mannosylphosphorylation, a transferase activity of MNN4 can not be ruled out. Mediates mannosylphosphate transfer in both the core and outer chain portions of N-linked oligosaccharides. Has partially redundant function with MNN14. The polypeptide is Mannosyltransferase regulator 4 (Saccharomyces cerevisiae (strain ATCC 204508 / S288c) (Baker's yeast)).